The primary structure comprises 121 residues: Holo-[acyl-carrier-protein] synthase (121 aa).

2 residues coordinate Mg(2+): Asp5 and Glu50.

Belongs to the P-Pant transferase superfamily. AcpS family. Requires Mg(2+) as cofactor.

Its subcellular location is the cytoplasm. It catalyses the reaction apo-[ACP] + CoA = holo-[ACP] + adenosine 3',5'-bisphosphate + H(+). Transfers the 4'-phosphopantetheine moiety from coenzyme A to a Ser of acyl-carrier-protein. The protein is Holo-[acyl-carrier-protein] synthase of Sulfurimonas denitrificans (strain ATCC 33889 / DSM 1251) (Thiomicrospira denitrificans (strain ATCC 33889 / DSM 1251)).